The primary structure comprises 232 residues: Succinyl-CoA:3-ketoacid coenzyme A transferase subunit A (232 aa).

CoA is bound at residue G24–G30.

The protein belongs to the 3-oxoacid CoA-transferase subunit A family. As to quaternary structure, heterodimer of a subunit A and a subunit B.

The catalysed reaction is a 3-oxo acid + succinyl-CoA = a 3-oxoacyl-CoA + succinate. This chain is Succinyl-CoA:3-ketoacid coenzyme A transferase subunit A (scoA), found in Helicobacter pylori (strain J99 / ATCC 700824) (Campylobacter pylori J99).